A 277-amino-acid polypeptide reads, in one-letter code: Shikimate dehydrogenase (NADP(+)) (277 aa).

Shikimate-binding positions include 15–17 and threonine 62; that span reads SLS. Catalysis depends on lysine 66, which acts as the Proton acceptor. Residues asparagine 87 and aspartate 102 each coordinate shikimate. Residues 127 to 131, 151 to 156, and isoleucine 219 contribute to the NADP(+) site; these read GAGGA and NRTVDK. Tyrosine 221 lines the shikimate pocket. Glycine 242 is a binding site for NADP(+).

The protein belongs to the shikimate dehydrogenase family. In terms of assembly, homodimer.

It catalyses the reaction shikimate + NADP(+) = 3-dehydroshikimate + NADPH + H(+). Its pathway is metabolic intermediate biosynthesis; chorismate biosynthesis; chorismate from D-erythrose 4-phosphate and phosphoenolpyruvate: step 4/7. In terms of biological role, involved in the biosynthesis of the chorismate, which leads to the biosynthesis of aromatic amino acids. Catalyzes the reversible NADPH linked reduction of 3-dehydroshikimate (DHSA) to yield shikimate (SA). In Bacillus cereus (strain AH820), this protein is Shikimate dehydrogenase (NADP(+)).